The following is a 1850-amino-acid chain: Vitellogenin-2 (1850 aa).

The first 15 residues, 1–15 (MRGIILALVLTLVGS), serve as a signal peptide directing secretion. A Vitellogenin domain is found at 24-662 (FNSRRSYLYN…SPRTMFPSAI (639 aa)). Residue N604 is glycosylated (N-linked (GlcNAc...) asparagine). Residues 935 to 984 (DAPLDVTEEPFQTSERASREHFAMQGPDSMPRKQSHSSREDLRRSTGKRA) are disordered. An N-linked (GlcNAc...) asparagine glycan is attached at N1094. Disordered stretches follow at residues 1115-1313 (GTEP…SSSS) and 1338-1362 (EFPKRKLPGDRATSRYSSTRSSHDT). Low complexity predominate over residues 1122 to 1143 (TSSSSSSASSTATSSSSSSASS). Residues 1156 to 1165 (DQVKQARNKD) show a composition bias toward basic and acidic residues. A compositionally biased stretch (low complexity) spans 1167 to 1266 (SSSSRSSKSS…SRSSSSSSKS (100 aa)). N1177 and N1188 each carry an N-linked (GlcNAc...) asparagine glycan. Residues 1267–1277 (SSHHSHSHHSG) show a composition bias toward basic residues. A compositionally biased stretch (low complexity) spans 1278–1291 (HLNGSSSSSSSSRS). N1280 carries an N-linked (GlcNAc...) asparagine glycan. A compositionally biased stretch (basic and acidic residues) spans 1338 to 1350 (EFPKRKLPGDRAT). N-linked (GlcNAc...) asparagine glycosylation is found at N1417, N1597, and N1665. In terms of domain architecture, VWFD spans 1579-1756 (ARCSVSYNKI…SWILEEAPCR (178 aa)). 2 cysteine pairs are disulfide-bonded: C1581/C1719 and C1604/C1755.

In terms of processing, phosvitin, an egg yolk storage protein, is one of the most highly phosphorylated (10%) proteins in nature. Cathepsin D is responsible for intraoocytic processing of vitellogenin. Post-translationally, may contain intrachain disulfide bonds. In terms of tissue distribution, after incorporation from serum via a specific receptor, it is cleaved into four fragments, heavy and light chain lipovitellins, phosphovitin and YGP40, and YGP40 is released into the yolk plasma before or during compartmentation of lipovitellin-phosvitin complex into the yolk granule.

In terms of biological role, precursor of the major egg-yolk proteins that are sources of nutrients during early development of oviparous organisms. Its function is as follows. Phosvitin is believed to be of importance in sequestering calcium, iron and other cations for the developing embryo. The sequence is that of Vitellogenin-2 (VTG2) from Gallus gallus (Chicken).